A 393-amino-acid polypeptide reads, in one-letter code: G protein-activated inward rectifier potassium channel 3 (393 aa).

Residues 1–23 (MAQENAAFSPGSEEPPRRRGRQR) are disordered. Topologically, residues 1-57 (MAQENAAFSPGSEEPPRRRGRQRYVEKDGRCNVQQGNVRETYRYLTDLFTTLVDLQW) are cytoplasmic. The helical transmembrane segment at 58-82 (RLSLLFFVLAYALTWLFFGAIWWLI) threads the bilayer. Over 83 to 106 (AYGRGDLEHLEDTAWTPCVNNLNG) the chain is Extracellular. The helical; Pore-forming intramembrane region spans 107 to 118 (FVAAFLFSIETE). An intramembrane region (pore-forming) is located at residues 119-125 (TTIGYGH). Residues 120 to 125 (TIGYGH) carry the Selectivity filter motif. Residues 126-134 (RVITDQCPE) lie on the Extracellular side of the membrane. A helical membrane pass occupies residues 135–156 (GIVLLLLQAILGSMVNAFMVGC). The Cytoplasmic segment spans residues 157–393 (MFVKISQPNK…LPPPESESKV (237 aa)). Residues 360–393 (KVEEEGAGEGAGAGDGADKEQNGCLPPPESESKV) are disordered. A compositionally biased stretch (pro residues) spans 384–393 (LPPPESESKV). A PDZ-binding motif is present at residues 390 to 393 (ESKV).

Belongs to the inward rectifier-type potassium channel (TC 1.A.2.1) family. KCNJ9 subfamily. As to quaternary structure, associates with KCNJ3/GIRK1 to form a G-protein-activated heteromultimer pore-forming unit. Interacts (via PDZ-binding motif) with SNX27 (via PDZ domain); the interaction is required when endocytosed to prevent degradation in lysosomes and promote recycling to the plasma membrane.

The protein resides in the membrane. It carries out the reaction K(+)(in) = K(+)(out). This receptor is controlled by G proteins. Inward rectifier potassium channels are characterized by a greater tendency to allow potassium to flow into the cell rather than out of it. Their voltage dependence is regulated by the concentration of extracellular potassium; as external potassium is raised, the voltage range of the channel opening shifts to more positive voltages. The inward rectification is mainly due to the blockage of outward current by internal magnesium. Unable to produce channel activity when expressed alone but forms a functional channel in association with KCNJ3/GIRK1. The chain is G protein-activated inward rectifier potassium channel 3 (Kcnj9) from Rattus norvegicus (Rat).